The sequence spans 205 residues: Holliday junction branch migration complex subunit RuvA (205 aa).

Positions 1–65 are domain I; sequence MIGRLRGAVA…SAGLRLYGFL (65 aa). A domain II region spans residues 66–144; the sequence is TREDRRAFVL…TDGPVLMSAP (79 aa). Residues 145–153 form a flexible linker region; sequence TSSAPSAPA. The tract at residues 153 to 205 is domain III; sequence AKPAPTGDAVAALMGLGVAEVNARRVVEAAAAELGEEATVQALIKAGLKELGR.

It belongs to the RuvA family. As to quaternary structure, homotetramer. Forms an RuvA(8)-RuvB(12)-Holliday junction (HJ) complex. HJ DNA is sandwiched between 2 RuvA tetramers; dsDNA enters through RuvA and exits via RuvB. An RuvB hexamer assembles on each DNA strand where it exits the tetramer. Each RuvB hexamer is contacted by two RuvA subunits (via domain III) on 2 adjacent RuvB subunits; this complex drives branch migration. In the full resolvosome a probable DNA-RuvA(4)-RuvB(12)-RuvC(2) complex forms which resolves the HJ.

It is found in the cytoplasm. In terms of biological role, the RuvA-RuvB-RuvC complex processes Holliday junction (HJ) DNA during genetic recombination and DNA repair, while the RuvA-RuvB complex plays an important role in the rescue of blocked DNA replication forks via replication fork reversal (RFR). RuvA specifically binds to HJ cruciform DNA, conferring on it an open structure. The RuvB hexamer acts as an ATP-dependent pump, pulling dsDNA into and through the RuvAB complex. HJ branch migration allows RuvC to scan DNA until it finds its consensus sequence, where it cleaves and resolves the cruciform DNA. The sequence is that of Holliday junction branch migration complex subunit RuvA from Caulobacter vibrioides (strain ATCC 19089 / CIP 103742 / CB 15) (Caulobacter crescentus).